The chain runs to 510 residues: Inositol-3-phosphate synthase (510 aa).

Positions 70, 71, 72, 73, 143, 180, 190, 193, 230, 231, 232, 233, 281, 282, 306, 309, 340, 341, 342, 355, 393, 394, 422, and 423 each coordinate NAD(+).

The protein belongs to the myo-inositol 1-phosphate synthase family. Requires NAD(+) as cofactor.

The protein resides in the cytoplasm. Its subcellular location is the cytosol. The protein localises to the nucleus. The enzyme catalyses D-glucose 6-phosphate = 1D-myo-inositol 3-phosphate. It participates in polyol metabolism; myo-inositol biosynthesis; myo-inositol from D-glucose 6-phosphate: step 1/2. Its function is as follows. Key enzyme in myo-inositol biosynthesis pathway that catalyzes the conversion of glucose 6-phosphate to 1-myo-inositol 1-phosphate in a NAD-dependent manner. This chain is Inositol-3-phosphate synthase, found in Zea mays (Maize).